The sequence spans 445 residues: Ribosomal protein uS12 methylthiotransferase RimO (445 aa).

One can recognise an MTTase N-terminal domain in the interval isoleucine 4–lysine 119. [4Fe-4S] cluster contacts are provided by cysteine 13, cysteine 48, cysteine 82, cysteine 156, cysteine 160, and cysteine 163. A Radical SAM core domain is found at threonine 142–aspartate 372. In terms of domain architecture, TRAM spans lysine 375–asparagine 441.

This sequence belongs to the methylthiotransferase family. RimO subfamily. The cofactor is [4Fe-4S] cluster.

It localises to the cytoplasm. It carries out the reaction L-aspartate(89)-[ribosomal protein uS12]-hydrogen + (sulfur carrier)-SH + AH2 + 2 S-adenosyl-L-methionine = 3-methylsulfanyl-L-aspartate(89)-[ribosomal protein uS12]-hydrogen + (sulfur carrier)-H + 5'-deoxyadenosine + L-methionine + A + S-adenosyl-L-homocysteine + 2 H(+). Its function is as follows. Catalyzes the methylthiolation of an aspartic acid residue of ribosomal protein uS12. This is Ribosomal protein uS12 methylthiotransferase RimO from Clostridium botulinum (strain Langeland / NCTC 10281 / Type F).